The sequence spans 406 residues: Succinyl-diaminopimelate desuccinylase (406 aa).

A Zn(2+)-binding site is contributed by H95. D97 is a catalytic residue. Residue D128 participates in Zn(2+) binding. E162 functions as the Proton acceptor in the catalytic mechanism. Residues E163, E191, and H377 each coordinate Zn(2+).

The protein belongs to the peptidase M20A family. DapE subfamily. In terms of assembly, homodimer. The cofactor is Zn(2+). It depends on Co(2+) as a cofactor.

The enzyme catalyses N-succinyl-(2S,6S)-2,6-diaminopimelate + H2O = (2S,6S)-2,6-diaminopimelate + succinate. It participates in amino-acid biosynthesis; L-lysine biosynthesis via DAP pathway; LL-2,6-diaminopimelate from (S)-tetrahydrodipicolinate (succinylase route): step 3/3. Catalyzes the hydrolysis of N-succinyl-L,L-diaminopimelic acid (SDAP), forming succinate and LL-2,6-diaminopimelate (DAP), an intermediate involved in the bacterial biosynthesis of lysine and meso-diaminopimelic acid, an essential component of bacterial cell walls. The sequence is that of Succinyl-diaminopimelate desuccinylase from Polaromonas naphthalenivorans (strain CJ2).